We begin with the raw amino-acid sequence, 385 residues long: 1-deoxy-D-xylulose 5-phosphate reductoisomerase (385 aa).

NADPH contacts are provided by Thr13, Gly14, Ser15, Ile16, Asn40, and Asn122. Residue Lys123 coordinates 1-deoxy-D-xylulose 5-phosphate. An NADPH-binding site is contributed by Glu124. A Mn(2+)-binding site is contributed by Asp148. 1-deoxy-D-xylulose 5-phosphate-binding residues include Ser149, Glu150, Ser177, and His200. Mn(2+) is bound at residue Glu150. Gly206 is a binding site for NADPH. Residues Ser213, Asn218, Lys219, and Glu222 each contribute to the 1-deoxy-D-xylulose 5-phosphate site. Residue Glu222 coordinates Mn(2+).

This sequence belongs to the DXR family. Mg(2+) serves as cofactor. Requires Mn(2+) as cofactor.

The catalysed reaction is 2-C-methyl-D-erythritol 4-phosphate + NADP(+) = 1-deoxy-D-xylulose 5-phosphate + NADPH + H(+). It functions in the pathway isoprenoid biosynthesis; isopentenyl diphosphate biosynthesis via DXP pathway; isopentenyl diphosphate from 1-deoxy-D-xylulose 5-phosphate: step 1/6. In terms of biological role, catalyzes the NADPH-dependent rearrangement and reduction of 1-deoxy-D-xylulose-5-phosphate (DXP) to 2-C-methyl-D-erythritol 4-phosphate (MEP). The polypeptide is 1-deoxy-D-xylulose 5-phosphate reductoisomerase (Francisella tularensis subsp. holarctica (strain FTNF002-00 / FTA)).